Reading from the N-terminus, the 338-residue chain is Outer membrane transporter protein TsaT (338 aa).

A signal peptide spans Met-1–Ala-22.

In terms of assembly, part of a two-component transport system composed of TsaT and TsaS.

The protein localises to the cell outer membrane. Its function is as follows. Involved in the uptake of p-toluenesulphonate (TSA). Forms a large, general diffusion pore with a preference for anions. The sequence is that of Outer membrane transporter protein TsaT (tsaT) from Comamonas testosteroni (Pseudomonas testosteroni).